A 49-amino-acid chain; its full sequence is Large ribosomal subunit protein bL33B (49 aa).

The protein belongs to the bacterial ribosomal protein bL33 family.

The sequence is that of Large ribosomal subunit protein bL33B from Listeria welshimeri serovar 6b (strain ATCC 35897 / DSM 20650 / CCUG 15529 / CIP 8149 / NCTC 11857 / SLCC 5334 / V8).